The following is a 36-amino-acid chain: Photosystem I reaction center subunit VIII (36 aa).

Residues 6–26 (LPSIFVPLVGLVFPAIAMASL) traverse the membrane as a helical segment.

This sequence belongs to the PsaI family.

The protein resides in the plastid. The protein localises to the chloroplast thylakoid membrane. Its function is as follows. May help in the organization of the PsaL subunit. This Liriodendron tulipifera (Tuliptree) protein is Photosystem I reaction center subunit VIII.